A 177-amino-acid chain; its full sequence is Cytochrome c-type biogenesis protein CcmE (177 aa).

Over 1–7 the chain is Cytoplasmic; the sequence is MTRKSRR. Residues 8–28 traverse the membrane as a helical; Signal-anchor for type II membrane protein segment; sequence LILIAACGAVLALALGLILSA. The Periplasmic portion of the chain corresponds to 29 to 177; that stretch reads MSGSIVFFRS…DATLGQRSER (149 aa). Residues His-122 and Tyr-126 each contribute to the heme site. The disordered stretch occupies residues 133–177; that stretch reads DALKAQGRWQEGGSKEAPKDASKAAPKDAAKPETADATLGQRSER. Over residues 145–166 the composition is skewed to basic and acidic residues; it reads GSKEAPKDASKAAPKDAAKPET.

It belongs to the CcmE/CycJ family.

It is found in the cell inner membrane. Its function is as follows. Heme chaperone required for the biogenesis of c-type cytochromes. Transiently binds heme delivered by CcmC and transfers the heme to apo-cytochromes in a process facilitated by CcmF and CcmH. The polypeptide is Cytochrome c-type biogenesis protein CcmE (Methylorubrum extorquens (strain PA1) (Methylobacterium extorquens)).